Here is a 142-residue protein sequence, read N- to C-terminus: Fluoride-specific ion channel FluC 1 (142 aa).

4 consecutive transmembrane segments (helical) span residues 23 to 43 (VNIA…YLID), 54 to 74 (LPLG…GLIG), 79 to 99 (GWLL…FSTF), and 116 to 136 (LGNV…AVSL). The Na(+) site is built by Gly91 and Thr94.

It belongs to the fluoride channel Fluc/FEX (TC 1.A.43) family.

The protein resides in the cell membrane. It carries out the reaction fluoride(in) = fluoride(out). Its activity is regulated as follows. Na(+) is not transported, but it plays an essential structural role and its presence is essential for fluoride channel function. In terms of biological role, fluoride-specific ion channel. Important for reducing fluoride concentration in the cell, thus reducing its toxicity. The protein is Fluoride-specific ion channel FluC 1 of Nocardia farcinica (strain IFM 10152).